We begin with the raw amino-acid sequence, 391 residues long: Tryptophan synthase beta chain (391 aa).

Lys-84 carries the N6-(pyridoxal phosphate)lysine modification.

The protein belongs to the TrpB family. In terms of assembly, tetramer of two alpha and two beta chains. Pyridoxal 5'-phosphate is required as a cofactor.

The enzyme catalyses (1S,2R)-1-C-(indol-3-yl)glycerol 3-phosphate + L-serine = D-glyceraldehyde 3-phosphate + L-tryptophan + H2O. The protein operates within amino-acid biosynthesis; L-tryptophan biosynthesis; L-tryptophan from chorismate: step 5/5. In terms of biological role, the beta subunit is responsible for the synthesis of L-tryptophan from indole and L-serine. This Thermoanaerobacter sp. (strain X514) protein is Tryptophan synthase beta chain.